The following is a 62-amino-acid chain: Small ribosomal subunit protein eS17 (62 aa).

This sequence belongs to the eukaryotic ribosomal protein eS17 family.

The chain is Small ribosomal subunit protein eS17 from Methanocaldococcus jannaschii (strain ATCC 43067 / DSM 2661 / JAL-1 / JCM 10045 / NBRC 100440) (Methanococcus jannaschii).